The sequence spans 298 residues: ATP phosphoribosyltransferase (298 aa).

This sequence belongs to the ATP phosphoribosyltransferase family. Long subfamily. Mg(2+) serves as cofactor.

It is found in the cytoplasm. It catalyses the reaction 1-(5-phospho-beta-D-ribosyl)-ATP + diphosphate = 5-phospho-alpha-D-ribose 1-diphosphate + ATP. The protein operates within amino-acid biosynthesis; L-histidine biosynthesis; L-histidine from 5-phospho-alpha-D-ribose 1-diphosphate: step 1/9. Feedback inhibited by histidine. Functionally, catalyzes the condensation of ATP and 5-phosphoribose 1-diphosphate to form N'-(5'-phosphoribosyl)-ATP (PR-ATP). Has a crucial role in the pathway because the rate of histidine biosynthesis seems to be controlled primarily by regulation of HisG enzymatic activity. The sequence is that of ATP phosphoribosyltransferase from Tolumonas auensis (strain DSM 9187 / NBRC 110442 / TA 4).